The chain runs to 441 residues: 23S rRNA (uracil(1939)-C(5))-methyltransferase RlmD (441 aa).

A TRAM domain is found at 10-68 (KPLKQQSLVLDITAMDHHGRGIAKHNNKVCFVSNALPNEQVKATIIADKARYSEAQTHK). Cysteine 81, cysteine 87, cysteine 90, and cysteine 169 together coordinate [4Fe-4S] cluster. Positions 274, 303, 308, 324, 351, and 372 each coordinate S-adenosyl-L-methionine. Cysteine 398 acts as the Nucleophile in catalysis.

Belongs to the class I-like SAM-binding methyltransferase superfamily. RNA M5U methyltransferase family. RlmD subfamily.

The enzyme catalyses uridine(1939) in 23S rRNA + S-adenosyl-L-methionine = 5-methyluridine(1939) in 23S rRNA + S-adenosyl-L-homocysteine + H(+). In terms of biological role, catalyzes the formation of 5-methyl-uridine at position 1939 (m5U1939) in 23S rRNA. In Pseudoalteromonas translucida (strain TAC 125), this protein is 23S rRNA (uracil(1939)-C(5))-methyltransferase RlmD.